A 340-amino-acid chain; its full sequence is Protein-arginine kinase (340 aa).

Positions 21 to 242 (VVLSSRIRLA…EQIIMQERVA (222 aa)) constitute a Phosphagen kinase C-terminal domain. ATP is bound by residues 24-28 (SSRIR), histidine 79, arginine 113, 164-168 (RASVM), and 195-200 (RGIYGE).

Belongs to the ATP:guanido phosphotransferase family.

The enzyme catalyses L-arginyl-[protein] + ATP = N(omega)-phospho-L-arginyl-[protein] + ADP + H(+). Its function is as follows. Catalyzes the specific phosphorylation of arginine residues in proteins. The protein is Protein-arginine kinase of Listeria monocytogenes serotype 4b (strain F2365).